We begin with the raw amino-acid sequence, 357 residues long: Protein Wnt-5b (357 aa).

An N-terminal signal peptide occupies residues 1 to 18 (MPGIRLLLAAALLCCPPP). An intrachain disulfide couples C81 to C92. 2 N-linked (GlcNAc...) asparagine glycosylation sites follow: N91 and N97. Disulfide bonds link C131/C139, C141/C159, C215/C229, C217/C224, C286/C317, C302/C312, C316/C356, C332/C347, C334/C344, and C339/C340. A lipid anchor (O-palmitoleoyl serine; by PORCN) is attached at S221. N-linked (GlcNAc...) asparagine glycans are attached at residues N289 and N303.

This sequence belongs to the Wnt family. In terms of processing, palmitoleoylation is required for efficient binding to frizzled receptors. Depalmitoleoylation leads to Wnt signaling pathway inhibition. In terms of tissue distribution, predominantly in neuroectodermal tissues.

Its subcellular location is the secreted. The protein resides in the extracellular space. The protein localises to the extracellular matrix. In terms of biological role, ligand for members of the frizzled family of seven transmembrane receptors. Probable developmental protein. May be a signaling molecule which affects the development of discrete regions of tissues. Is likely to signal over only few cell diameters. This is Protein Wnt-5b (WNT-5B) from Ambystoma mexicanum (Axolotl).